The chain runs to 389 residues: Indole-3-acetate monooxygenase (389 aa).

Belongs to the HpaH/HsaA monooxygenase family.

The enzyme catalyses (indol-3-yl)acetate + NADH + O2 + H(+) = 2-hydroxy-(1H-indol-3-yl)acetate + NAD(+) + H2O. The catalysed reaction is indole + NADH + O2 + H(+) = indoxyl + NAD(+) + H2O. In terms of biological role, involved in the degradation of the plant hormone indole-3-acetic acid (IAA). Catalyzes the first step of the pathway, the conversion of IAA to 2-hydroxy-IAA (2-OH-IAA). Can also convert indole to indoxyl, which spontaneously dimerizes in the presence of oxygen to form the blue pigment indigo. This is Indole-3-acetate monooxygenase from Acinetobacter baumannii (strain ATCC 19606 / DSM 30007 / JCM 6841 / CCUG 19606 / CIP 70.34 / NBRC 109757 / NCIMB 12457 / NCTC 12156 / 81).